We begin with the raw amino-acid sequence, 87 residues long: U3-theraphotoxin-Hhn1o (87 aa).

The N-terminal stretch at 1–24 (MVNMKASMFLTFAGLVLLFVVCYA) is a signal peptide. A propeptide spanning residues 25–52 (SESEEKEFPKEMLSSIFAVDNDFKQEER) is cleaved from the precursor. 2 cysteine pairs are disulfide-bonded: Cys-54-Cys-67 and Cys-61-Cys-72.

It belongs to the neurotoxin 10 (Hwtx-1) family. 51 (Hntx-8) subfamily. Hntx-8 sub-subfamily. Expressed by the venom gland.

It localises to the secreted. In terms of biological role, ion channel inhibitor. This is U3-theraphotoxin-Hhn1o from Cyriopagopus hainanus (Chinese bird spider).